The chain runs to 131 residues: Small ribosomal subunit protein bS6 (131 aa).

The tract at residues 98–131 is disordered; sequence EASPMVKAKDERRERRDDFANETADDADAGDSEE. The span at 104 to 116 shows a compositional bias: basic and acidic residues; that stretch reads KAKDERRERRDDF. Residues 120 to 131 show a composition bias toward acidic residues; it reads TADDADAGDSEE.

It belongs to the bacterial ribosomal protein bS6 family.

Binds together with bS18 to 16S ribosomal RNA. The protein is Small ribosomal subunit protein bS6 of Citrobacter koseri (strain ATCC BAA-895 / CDC 4225-83 / SGSC4696).